Here is a 32-residue protein sequence, read N- to C-terminus: Protamine S4 (32 aa).

The interval 1–32 (GCKKRKARKRPKCKKARKRPKCKRRKVAKKKC) is disordered.

Testis.

It is found in the nucleus. Its subcellular location is the chromosome. Protamines substitute for histones in the chromatin of sperm during the haploid phase of spermatogenesis. They compact sperm DNA into a highly condensed, stable and inactive complex. The protein is Protamine S4 of Scyliorhinus canicula (Small-spotted catshark).